Reading from the N-terminus, the 494-residue chain is MEPLTIVSLVVASLFLFAFWALSPKTSKNLPPGPPKLPIIGNIHQLKSPTPHRVLRNLARKYGPIMHLQLGQVSTVVVSTPRLAREIMKTNDISFADRPTTTTSQIFFYKAQDIGWAPYGEYWRQMKKICTLELLSAKKVRSFSSIREEELSRISKVLESQAGTPINFTEMTVEMVNNVICKATLGDSCKDQATLIEVLYDVLKTLSAFNLASYYPGLQFLNVILGKKAKWLKMQKQLDDILEDVLKEHRSKGSNKSDQEDLVDVLLRVKDTGGLDFTVTDEHVKAVVLDMLTAGTDTSSATLEWAMTELMRNPHMMKRAQDEVRSVVKGNTITETDLQSLHYLKLIVKETLRLHAPTPLLVPRECRQDCNVDGYDIPAKTKILVNAWACGTDPDSWKDPESFIPERFENCPINYMGADFEFIPFGAGRRICPGLTFGLSMVEYPLANFLYHFDWKLPNGLKPHELDITEITGISTSLKHQLKIVPMIPKSIAK.

Residues 3–23 (PLTIVSLVVASLFLFAFWALS) form a helical membrane-spanning segment. Heme is bound at residue cysteine 432.

The protein belongs to the cytochrome P450 family. Requires heme as cofactor.

It localises to the membrane. It carries out the reaction germacra-1(10),4,11(13)-trien-12-oate + reduced [NADPH--hemoprotein reductase] + O2 = (+)-costunolide + oxidized [NADPH--hemoprotein reductase] + 2 H2O. Functionally, hydroxylates germacrene A acid to 6-alpha-hydroxy-germacrne A acid, a precursor of sesquiterpene lactones that spontaneously undergoes a lactonization which yields costunolide. Costunolide can then spontaneously conjugate to glutathione or cysteine. The protein is Costunolide synthase (CYP71BL3) of Cichorium intybus (Chicory).